Reading from the N-terminus, the 79-residue chain is uncharacterized protein (79 aa).

The span at 22-72 (NNNNNNNNNNNNNNNNNNNNNNNNNNNNNNNNNNNNNNNNNNNNNNNNNNN) shows a compositional bias: low complexity. Positions 22-79 (NNNNNNNNNNNNNNNNNNNNNNNNNNNNNNNNNNNNNNNNNNNNNNNNNNNKRFFFFG) are disordered.

This is an uncharacterized protein from Dictyostelium discoideum (Social amoeba).